The sequence spans 920 residues: Urea transporter 2 (920 aa).

The tract at residues 25–57 (FTSPSWPSTSPDTHPALPLLEMPEEKDLRSSNE) is disordered. Positions 26-39 (TSPSWPSTSPDTHP) are enriched in low complexity. A compositionally biased stretch (basic and acidic residues) spans 47-57 (PEEKDLRSSNE). 9 consecutive transmembrane segments (helical) span residues 151-170 (WWTI…ALAL), 176-196 (AIAS…MAVF), 204-224 (WWLL…SSAL), 233-253 (LPVF…ATGH), 272-291 (ITWT…VGVG), 302-322 (GGVF…HAAI), 346-366 (WSYN…ALTW), 370-390 (LLAL…SNIM), and 392-412 (VVGV…FLLL). Positions 446–467 (EKAPSGGGGEHPPTAGPKVEEG) are disordered. Residue S477 is modified to Phosphoserine. Transmembrane regions (helical) follow at residues 600–620 (GILI…SGCL), 638–658 (AIAA…MAVF), 666–686 (WWLL…SSAL), and 695–715 (LPVF…ATGH). An N-linked (GlcNAc...) asparagine glycan is attached at N733. Helical transmembrane passes span 764-784 (GGIF…HAAI), 803-823 (IYFG…GGMF), 832-852 (LLAI…ANML), and 854-874 (VFGL…FLLL).

Belongs to the urea transporter family. Interacts with SNAPIN which enhances its urea transport activity. Epressed in the inner medulla of the kidney (at protein level). In terms of tissue distribution, expressed in the kidney.

The protein localises to the apical cell membrane. Its subcellular location is the cell membrane. It carries out the reaction urea(in) = urea(out). With respect to regulation, inhibited by phloretin. In terms of biological role, mediates the transport of urea driven by a concentration gradient across the cell membrane of the renal inner medullary collecting duct which is critical to the urinary concentrating mechanism. Its function is as follows. Mediates the transport of urea driven by a concentration gradient across the cell membrane of the kidney inner medullary collecting duct which is critical to the urinary concentrating mechanism. The polypeptide is Urea transporter 2 (SLC14A2) (Homo sapiens (Human)).